The chain runs to 268 residues: Ribosomal RNA small subunit methyltransferase A (268 aa).

Residues N11, L13, G37, E58, D86, and N104 each coordinate S-adenosyl-L-methionine.

The protein belongs to the class I-like SAM-binding methyltransferase superfamily. rRNA adenine N(6)-methyltransferase family. RsmA subfamily.

It is found in the cytoplasm. The catalysed reaction is adenosine(1518)/adenosine(1519) in 16S rRNA + 4 S-adenosyl-L-methionine = N(6)-dimethyladenosine(1518)/N(6)-dimethyladenosine(1519) in 16S rRNA + 4 S-adenosyl-L-homocysteine + 4 H(+). Functionally, specifically dimethylates two adjacent adenosines (A1518 and A1519) in the loop of a conserved hairpin near the 3'-end of 16S rRNA in the 30S particle. May play a critical role in biogenesis of 30S subunits. This is Ribosomal RNA small subunit methyltransferase A from Campylobacter fetus subsp. fetus (strain 82-40).